A 293-amino-acid chain; its full sequence is MEEQEIGVPAASLAGIKHIILILSGKGGVGKSSVTTQTALTLCSMGFKVGVLDIDLTGPSLPRMFGLENESIYQGPEGWQPVKVETNSTGSLSVISLGFLLGDRGNSVIWRGPKKTSMIKQFISDVAWGELDYLLIDTPPGTSDEHISIAEELRYSKPDGGIVVTTPQSVATADVKKEINFCKKVDLKILGIIENMSGFVCPHCAECTNIFSSGGGKRLSEQFSVPYLGNVPIDPKFVEMIENQVSSKKTLVEMYRESSLCPIFEEIMKKLRKQDTTTPVVDKHEQPQIESPK.

Position 25 to 32 (25 to 32 (GKGGVGKS)) interacts with ATP. [4Fe-4S] cluster is bound by residues C201 and C204. Phosphoserine is present on S291.

The protein belongs to the Mrp/NBP35 ATP-binding proteins family. NUBP2/CFD1 subfamily. Heterotetramer of 2 NBP35 and 2 CFD1 chains. It depends on [4Fe-4S] cluster as a cofactor.

The protein localises to the cytoplasm. Its function is as follows. Component of the cytosolic iron-sulfur (Fe/S) protein assembly (CIA) machinery. Required for maturation of extramitochondrial Fe-S proteins. The NBP35-CFD1 heterotetramer forms a Fe-S scaffold complex, mediating the de novo assembly of an Fe-S cluster and its transfer to target apoproteins. Nucleotide binding/hydrolysis seems to be critcal for loading of Fe-S clusters onto CFD1 and NBP35. Required for biogenesis and export of both ribosomal subunits, which may reflect a role in assembly of the Fe/S clusters in RLI1, a protein which performs rRNA processing and ribosome export. The protein is Cytosolic Fe-S cluster assembly factor CFD1 of Saccharomyces cerevisiae (strain ATCC 204508 / S288c) (Baker's yeast).